Here is a 189-residue protein sequence, read N- to C-terminus: Dihydrofolate reductase (189 aa).

The 182-residue stretch at Ser-3–Lys-184 folds into the DHFR domain. NADP(+) contacts are provided by residues Ala-9 and Gly-15–Asn-21. A substrate-binding site is contributed by Glu-30 to Gln-35. Lys-54 to Thr-56 serves as a coordination point for NADP(+). Residues Asn-64 and Arg-70 each contribute to the substrate site. Residues Ser-76–Glu-78 and Gly-116–Ala-123 contribute to the NADP(+) site.

It belongs to the dihydrofolate reductase family.

It carries out the reaction (6S)-5,6,7,8-tetrahydrofolate + NADP(+) = 7,8-dihydrofolate + NADPH + H(+). Its pathway is cofactor biosynthesis; tetrahydrofolate biosynthesis; 5,6,7,8-tetrahydrofolate from 7,8-dihydrofolate: step 1/1. Key enzyme in folate metabolism. Contributes to the de novo mitochondrial thymidylate biosynthesis pathway. Catalyzes an essential reaction for de novo glycine and purine synthesis, and for DNA precursor synthesis. May bind to mRNA. This is Dihydrofolate reductase (DHFR) from Gallus gallus (Chicken).